The chain runs to 271 residues: Phosphate import ATP-binding protein PstB (271 aa).

The 243-residue stretch at 24-266 folds into the ABC transporter domain; it reads MIGQDVSVYY…PDDPRTQDYI (243 aa). Residue 56-63 coordinates ATP; that stretch reads GPSGCGKS.

It belongs to the ABC transporter superfamily. Phosphate importer (TC 3.A.1.7) family. The complex is composed of two ATP-binding proteins (PstB), two transmembrane proteins (PstC and PstA) and a solute-binding protein (PstS).

The protein resides in the cell inner membrane. It carries out the reaction phosphate(out) + ATP + H2O = ADP + 2 phosphate(in) + H(+). Part of the ABC transporter complex PstSACB involved in phosphate import. Responsible for energy coupling to the transport system. The protein is Phosphate import ATP-binding protein PstB of Rhizobium etli (strain ATCC 51251 / DSM 11541 / JCM 21823 / NBRC 15573 / CFN 42).